A 601-amino-acid chain; its full sequence is MDTTHDRRTSLSCDECRRRKLKCDRVRPQCGTCALSESECVFPGDSRKRGPKKGQLQALRARIRTLEQQLAAKDATWNMTYDFQDSTAAEPDEFSQCIQPNVNVFEPESMETLIFGIASSTSWPKNGMTPLDPALGAESHDSHISSTLSSLSLSALVQADLEQLFFDRVYQSAPIIHKARYITLMEQEDPLPACVCLRLAIRTSAAAFSARYHDIGERLYLETLQSLESLESNEHTLPWGAKNIQIEHIQSWLLLAVYEHMRMDKSQASSATSRALRLVQRCRLGDLDASDCLIQVGSHTTTATEEDFAVMEEKRRTFWLAFCFDRLLNTRDDLNWALPEEMVGFQHGHSLFSPGHFQGASLMYDLQIRMRVPASEASFQHSQDTNMPLLSEVMGEGNDDSLSPFATCVALMALYGCCATHRRLVSIAGGSGNESTKFWMRHNWLMSAIEKQRRLLQAPESTPNIFGDDPMLAFTHFFVPTLILHLVETADLWQWHSAEQEELRSVYKQQAYIAAKDRTRVAESLLCFSGFKVHPFLPTVLVRFFDFSGKRRIEMSDPDATSESRRNIRAMTKVLSLLRDIHRSAKEIPDDVLDGLETTLL.

Positions 13-40 (CDECRRRKLKCDRVRPQCGTCALSESEC) form a DNA-binding region, zn(2)-C6 fungal-type.

It is found in the nucleus. In terms of biological role, transcription factor that regulates the expression of the gene cluster that mediates the biosynthesis of abscisic acid (ABA), a phytohormone that acts antagonistically toward salicylic acid (SA), jasmonic acid (JA) and ethylene (ETH) signaling, to impede plant defense responses. The sequence is that of Abscisic acid cluster transcription factor abl7 from Leptosphaeria maculans (strain JN3 / isolate v23.1.3 / race Av1-4-5-6-7-8) (Blackleg fungus).